The sequence spans 32 residues: Secreted proteinase (32 aa).

A disordered region spans residues Asp1 to Leu32. Residue Asp22 is the Charge relay system of the active site.

It belongs to the peptidase S8 family.

It is found in the secreted. The sequence is that of Secreted proteinase from Haloferax mediterranei (Halobacterium mediterranei).